Here is a 126-residue protein sequence, read N- to C-terminus: Small ribosomal subunit protein uS13 (126 aa).

The interval 96-126 (PVRGQRTRTNARTRRGSRRTVAGKKKPAAKK) is disordered. Residues 100–126 (QRTRTNARTRRGSRRTVAGKKKPAAKK) are compositionally biased toward basic residues.

Belongs to the universal ribosomal protein uS13 family. Part of the 30S ribosomal subunit. Forms a loose heterodimer with protein S19. Forms two bridges to the 50S subunit in the 70S ribosome.

Functionally, located at the top of the head of the 30S subunit, it contacts several helices of the 16S rRNA. In the 70S ribosome it contacts the 23S rRNA (bridge B1a) and protein L5 of the 50S subunit (bridge B1b), connecting the 2 subunits; these bridges are implicated in subunit movement. Contacts the tRNAs in the A and P-sites. The protein is Small ribosomal subunit protein uS13 of Thermosynechococcus vestitus (strain NIES-2133 / IAM M-273 / BP-1).